Reading from the N-terminus, the 162-residue chain is GTP-dependent dephospho-CoA kinase (162 aa).

GTP contacts are provided by Asp-40, Val-41, Val-42, Asp-59, Lys-61, and Glu-111.

This sequence belongs to the GTP-dependent DPCK family.

It carries out the reaction 3'-dephospho-CoA + GTP = GDP + CoA + H(+). It participates in cofactor biosynthesis; coenzyme A biosynthesis. Functionally, catalyzes the GTP-dependent phosphorylation of the 3'-hydroxyl group of dephosphocoenzyme A to form coenzyme A (CoA). The chain is GTP-dependent dephospho-CoA kinase from Sulfurisphaera tokodaii (strain DSM 16993 / JCM 10545 / NBRC 100140 / 7) (Sulfolobus tokodaii).